A 758-amino-acid chain; its full sequence is Ribosomal RNA processing protein 1 homolog B (758 aa).

The residue at position 245 (Ser-245) is a Phosphoserine. A compositionally biased stretch (basic residues) spans 259 to 272 (AVSKKKTALGKNHS). Residues 259–285 (AVSKKKTALGKNHSRKDGLSDERGRDD) form a disordered region. Basic and acidic residues predominate over residues 273-285 (RKDGLSDERGRDD). Ser-350, Ser-392, Ser-394, and Ser-395 each carry phosphoserine. The tract at residues 381 to 598 (GSRVFCVEEE…KTASLKKRKK (218 aa)) is disordered. A compositionally biased stretch (basic residues) spans 397 to 408 (QKRRRKKKKKHH). Residues 447-457 (GAEATSSTGEE) show a composition bias toward low complexity. Phosphoserine occurs at positions 452 and 458. Residues 469 to 481 (HNKRKRPRKKSPR) show a composition bias toward basic residues. The segment covering 498–513 (SQSGPSGSHPQGPRGS) has biased composition (low complexity). Ser-513 is modified (phosphoserine). Residues 566-575 (QRRRLQKKKA) show a composition bias toward basic residues. Ser-579 is subject to Phosphoserine. N6-acetyllysine is present on Lys-652. The segment at 660-681 (KSSTATHPPGPAVQLNKTPSSS) is disordered. Phosphoserine occurs at positions 702 and 706. A disordered region spans residues 707-758 (PTGPSRVAFDPEQKPLHGVLKTPTSSPASSPLVAKKPLTTTPRRRPRAMDFF). Arg-712 carries the citrulline modification. The residue at position 728 (Thr-728) is a Phosphothreonine. Phosphoserine is present on residues Ser-732, Ser-735, and Ser-736.

Belongs to the RRP1 family. In terms of assembly, interacts with the transcriptional activator E2F1. Interacts with serine/threonine-protein phosphatase PP1 subunits PPP1CB and PPP1CC but not with PPP1CA. Interacts with 60S ribosomal proteins RPL5 and RPL27, ribosomal processing protein RRP1/NNP1 and other nucleolar proteins including NOP2/NOL1 and FBL. Also interacts with nucleolar protein NPM1/B23. Interacts with splicing factor SRSF1 and with LUC7L3/CROP. Interacts with GTPase activator SIPA1. Interacts with CBX5/HP1alpha, H1-10, NCL, PARP1, TRIM28 and YBX3. As to quaternary structure, (Microbial infection) Interacts with influenza A virus nucleoprotein NP and with RNA-directed RNA polymerase subunits PB1 and PB2. Post-translationally, citrullinated by PADI4.

It localises to the nucleus. The protein localises to the nucleolus. The protein resides in the nucleoplasm. It is found in the chromosome. In terms of biological role, positively regulates DNA damage-induced apoptosis by acting as a transcriptional coactivator of proapoptotic target genes of the transcriptional activator E2F1. Likely to play a role in ribosome biogenesis by targeting serine/threonine protein phosphatase PP1 to the nucleolus. Involved in regulation of mRNA splicing. Inhibits SIPA1 GTPase activity. Involved in regulating expression of extracellular matrix genes. Associates with chromatin and may play a role in modulating chromatin structure. Functionally, (Microbial infection) Following influenza A virus (IAV) infection, promotes viral mRNA transcription by facilitating the binding of IAV RNA-directed RNA polymerase to capped mRNA. The chain is Ribosomal RNA processing protein 1 homolog B (RRP1B) from Homo sapiens (Human).